Reading from the N-terminus, the 430-residue chain is Sesquiterpene synthase Agr5 (430 aa).

A signal peptide spans 1–25 (MASSLLEPSLAAIALVILLASVSLS). N113 is a glycosylation site (N-linked (GlcNAc...) asparagine). Residues D176, N311, S315, and E319 each contribute to the Mg(2+) site. Residues 176 to 180 (DEYTD) carry the DDXXD motif motif. 2 residues coordinate (2E,6E)-farnesyl diphosphate: R401 and Y402.

This sequence belongs to the terpene synthase family. Mg(2+) is required as a cofactor.

The enzyme catalyses (2E,6E)-farnesyl diphosphate = viridiflorene + diphosphate. In terms of biological role, terpene cyclase that catalyzes the cyclization of farnesyl diphosphate (FPP) to viridiflorene and viridiflorol. The sequence is that of Sesquiterpene synthase Agr5 from Cyclocybe aegerita (Black poplar mushroom).